A 594-amino-acid polypeptide reads, in one-letter code: UvrABC system protein C (594 aa).

The 78-residue stretch at 14-91 (DQPGCYLMKD…IKKYDPKYNI (78 aa)) folds into the GIY-YIG domain. Positions 196 to 231 (KEVRSELEIKMYEASEKLEFERAKELRDQIAHIDAI) constitute a UVR domain.

Belongs to the UvrC family. As to quaternary structure, interacts with UvrB in an incision complex.

The protein localises to the cytoplasm. The UvrABC repair system catalyzes the recognition and processing of DNA lesions. UvrC both incises the 5' and 3' sides of the lesion. The N-terminal half is responsible for the 3' incision and the C-terminal half is responsible for the 5' incision. The protein is UvrABC system protein C of Bacillus cereus (strain G9842).